We begin with the raw amino-acid sequence, 258 residues long: Type III pantothenate kinase (258 aa).

6 to 13 (DVGNTNTV) serves as a coordination point for ATP. Substrate contacts are provided by residues Tyr-100 and 107-110 (GADR). The Proton acceptor role is filled by Asp-109. A K(+)-binding site is contributed by Asp-129. Thr-132 provides a ligand contact to ATP. Substrate is bound at residue Thr-184.

The protein belongs to the type III pantothenate kinase family. Homodimer. NH4(+) is required as a cofactor. K(+) serves as cofactor.

Its subcellular location is the cytoplasm. It carries out the reaction (R)-pantothenate + ATP = (R)-4'-phosphopantothenate + ADP + H(+). The protein operates within cofactor biosynthesis; coenzyme A biosynthesis; CoA from (R)-pantothenate: step 1/5. Catalyzes the phosphorylation of pantothenate (Pan), the first step in CoA biosynthesis. This is Type III pantothenate kinase from Geobacillus kaustophilus (strain HTA426).